The primary structure comprises 360 residues: Mannose-1-phosphate guanyltransferase beta-A (360 aa).

It belongs to the transferase hexapeptide repeat family.

It carries out the reaction alpha-D-mannose 1-phosphate + GTP + H(+) = GDP-alpha-D-mannose + diphosphate. The protein operates within nucleotide-sugar biosynthesis; GDP-alpha-D-mannose biosynthesis; GDP-alpha-D-mannose from alpha-D-mannose 1-phosphate (GTP route): step 1/1. The sequence is that of Mannose-1-phosphate guanyltransferase beta-A (gmppb-a) from Xenopus laevis (African clawed frog).